The following is a 371-amino-acid chain: uncharacterized protein (371 aa).

The chain crosses the membrane as a helical span at residues 17 to 33 (FLLFSVVLIIVMTTLVF).

It to S.pombe SpBC4C3.08 and SpBC4C3.09.

It localises to the membrane. This is an uncharacterized protein from Schizosaccharomyces pombe (strain 972 / ATCC 24843) (Fission yeast).